Here is a 761-residue protein sequence, read N- to C-terminus: Proton-coupled zinc antiporter SLC30A5 (761 aa).

Met1 is subject to N-acetylmethionine. The Cytoplasmic segment spans residues 1–29 (MEEKYGGDARPGPGGGLGPVDVPSARLTR). A helical transmembrane segment spans residues 30 to 46 (YILLLCLTKCLKAVGLF). Over 47–54 (ESYDLLKA) the chain is Lumenal. The chain crosses the membrane as a helical span at residues 55-75 (VHIVQFIFILKLGTAFFMVLF). The Cytoplasmic portion of the chain corresponds to 76-96 (QKPFSSGKPITKHQWIKIFKH). The helical transmembrane segment at 97 to 117 (AVAGCIISLLWFFGLTLCGPL) threads the bilayer. Position 118 (Arg118) is a topological domain, lumenal. The chain crosses the membrane as a helical span at residues 119 to 139 (TLLLFEHSDIVVISLLSVLFT). The Cytoplasmic segment spans residues 140–150 (SSGGGPAKTRG). A helical transmembrane segment spans residues 151–171 (AAFFIIAVICLLLFDNDDLMA). Residues 172-191 (KMAEHPEGHHDSALTHMLYT) are Lumenal-facing. A helical transmembrane segment spans residues 192–212 (AIAFLGVADHKGGVLLLVLAL). The Cytoplasmic segment spans residues 213-236 (CCKVGFHTASRKLSIDVGGAKRLQ). The helical transmembrane segment at 237-257 (ALSQLVSVFLLCPWVIVLSVT) threads the bilayer. Over 258–264 (TESKVES) the chain is Lumenal. The helical transmembrane segment at 265 to 285 (WFSLIMPFTTVIFFVMILDFY) threads the bilayer. Over 286–301 (MDSVCSVKMDVSKCAR) the chain is Cytoplasmic. Residues 302 to 322 (YGSFPIFISALLFGNFWTHPI) traverse the membrane as a helical segment. Residues 323-340 (TDQLRAMNRAAHQESTEH) lie on the Lumenal side of the membrane. Residues 341–361 (VLSGGVVVSAVFFILSANILS) traverse the membrane as a helical segment. Residues 362–416 (SPSKRGQKGTLIGYSPEGTPLYHFMGDAFQHSSQSVPRFIKDSLKQVLEESDSRQ) are Cytoplasmic-facing. A helical transmembrane segment spans residues 417–437 (IFYFLCLNLLFTFVELFYGVL). The mediates homodimerization with SLC30A6 stretch occupies residues 418-636 (FYFLCLNLLF…VLIFLSVIPL (219 aa)). Over 438-446 (TNSLGLISD) the chain is Lumenal. Residues 447–467 (GFHMLFDCSALVMGLFAALMS) form a helical membrane-spanning segment. Zn(2+)-binding residues include His449 and Asp453. Residues 468-481 (RWKATRIFSYGYGR) are Cytoplasmic-facing. The helical transmembrane segment at 482-502 (IEILSGFINGLFLIVIAFFVF) threads the bilayer. Residues 503-518 (MESVARLIDPPELDTN) are Lumenal-facing. The chain crosses the membrane as a helical span at residues 519–539 (MLTPVSVGGLIVNLIGICAFS). Positions 540–574 (HAHSHGHGASQGNCHSDHGHSHHAHGHGHDHGHSH) are his-rich loop; required for zinc transport. Residues 540–588 (HAHSHGHGASQGNCHSDHGHSHHAHGHGHDHGHSHGFTGGGMNANMRGV) lie on the Cytoplasmic side of the membrane. Residues 549 to 576 (SQGNCHSDHGHSHHAHGHGHDHGHSHGF) form a disordered region. A helical membrane pass occupies residues 589-609 (FLHVLADTLGSIGVIVSTVLI). 2 residues coordinate Zn(2+): His591 and Asp595. The Lumenal segment spans residues 610-613 (EQFG). A helical membrane pass occupies residues 614–634 (WFIADPLCSLFIAVLIFLSVI). Topologically, residues 635 to 761 (PLIKDACQVL…KYCKDGTYIM (127 aa)) are cytoplasmic.

Belongs to the cation diffusion facilitator (CDF) transporter (TC 2.A.4) family. SLC30A subfamily. Heterodimer with SLC30A6/ZNT6; form a functional zinc ion transmembrane transporter. Post-translationally, could homodimerize through the formation of dityrosine bonds upon oxidative stress. In terms of tissue distribution, ubiquitously expressed.

Its subcellular location is the golgi apparatus. The protein localises to the golgi stack membrane. The protein resides in the cytoplasmic vesicle. It localises to the COPII-coated vesicle membrane. It is found in the secretory vesicle membrane. Its subcellular location is the trans-Golgi network membrane. The catalysed reaction is Zn(2+)(in) + 2 H(+)(out) = Zn(2+)(out) + 2 H(+)(in). Together with SLC30A6 forms a functional proton-coupled zinc ion antiporter mediating zinc entry into the lumen of organelles along the secretory pathway. By contributing to zinc ion homeostasis within the early secretory pathway, regulates the activation and folding of enzymes like alkaline phosphatases and enzymes involved in phosphatidylinositol glycan anchor biosynthesis. Through the transport of zinc into secretory granules of pancreatic beta-cells, plays an important role in the storage and secretion of insulin. This chain is Proton-coupled zinc antiporter SLC30A5, found in Mus musculus (Mouse).